We begin with the raw amino-acid sequence, 299 residues long: 4-diphosphocytidyl-2-C-methyl-D-erythritol kinase (299 aa).

The active site involves Lys10. 96 to 106 (PVAGGMAGGSA) lines the ATP pocket. Residue Asp138 is part of the active site.

This sequence belongs to the GHMP kinase family. IspE subfamily.

It carries out the reaction 4-CDP-2-C-methyl-D-erythritol + ATP = 4-CDP-2-C-methyl-D-erythritol 2-phosphate + ADP + H(+). It participates in isoprenoid biosynthesis; isopentenyl diphosphate biosynthesis via DXP pathway; isopentenyl diphosphate from 1-deoxy-D-xylulose 5-phosphate: step 3/6. Functionally, catalyzes the phosphorylation of the position 2 hydroxy group of 4-diphosphocytidyl-2C-methyl-D-erythritol. The polypeptide is 4-diphosphocytidyl-2-C-methyl-D-erythritol kinase (Streptomyces coelicolor (strain ATCC BAA-471 / A3(2) / M145)).